A 756-amino-acid polypeptide reads, in one-letter code: ATP-dependent 6-phosphofructokinase 2 (756 aa).

Positions methionine 1–isoleucine 393 are N-terminal catalytic PFK domain 1. Residues glycine 20, arginine 81–cysteine 82, and glycine 111–serine 114 each bind ATP. Residue aspartate 112 participates in Mg(2+) binding. Residues serine 157–aspartate 159, arginine 194, methionine 201–arginine 203, glutamate 257, arginine 285, and histidine 291–arginine 294 each bind substrate. Aspartate 159 acts as the Proton acceptor in catalysis. An interdomain linker region spans residues proline 394–lysine 404. The tract at residues threonine 405–serine 756 is C-terminal regulatory PFK domain 2. Beta-D-fructose 2,6-bisphosphate-binding positions include arginine 474, threonine 530–asparagine 534, methionine 575–serine 577, glutamate 632, arginine 658, and tyrosine 664–leucine 667.

The protein belongs to the phosphofructokinase type A (PFKA) family. ATP-dependent PFK group I subfamily. Eukaryotic two domain clade 'E' sub-subfamily. As to quaternary structure, homotetramer. Requires Mg(2+) as cofactor.

Its subcellular location is the cytoplasm. The enzyme catalyses beta-D-fructose 6-phosphate + ATP = beta-D-fructose 1,6-bisphosphate + ADP + H(+). It functions in the pathway carbohydrate degradation; glycolysis; D-glyceraldehyde 3-phosphate and glycerone phosphate from D-glucose: step 3/4. Allosterically activated by ADP, AMP, or fructose 2,6-bisphosphate, and allosterically inhibited by ATP or citrate. In terms of biological role, catalyzes the phosphorylation of D-fructose 6-phosphate to fructose 1,6-bisphosphate by ATP, the first committing step of glycolysis. The chain is ATP-dependent 6-phosphofructokinase 2 from Caenorhabditis elegans.